Here is a 636-residue protein sequence, read N- to C-terminus: NADP-dependent malic enzyme, chloroplastic (636 aa).

Residues 1-28 are disordered; it reads MLSTRTAAVAASASPASPWKLGGRSEGG. The transit peptide at 1–62 directs the protein to the chloroplast; sequence MLSTRTAAVA…LPPRRVDAVA (62 aa). Residues 7-18 show a composition bias toward low complexity; that stretch reads AAVAASASPASP. The active-site Proton donor is the Y184. An NAD(+)-binding site is contributed by R237. K255 serves as the catalytic Proton acceptor. E327, D328, and D351 together coordinate a divalent metal cation. D351 contacts NAD(+). NADP(+) is bound at residue 380-396; that stretch reads LFLGAGEAGTGIAELIA. N492 provides a ligand contact to NAD(+).

Belongs to the malic enzymes family. As to quaternary structure, homotetramer. Mg(2+) is required as a cofactor. Requires Mn(2+) as cofactor.

The protein localises to the plastid. Its subcellular location is the chloroplast. It catalyses the reaction (S)-malate + NADP(+) = pyruvate + CO2 + NADPH. The catalysed reaction is oxaloacetate + H(+) = pyruvate + CO2. Its pathway is photosynthesis; C4 acid pathway. The chloroplastic ME isoform decarboxylates malate shuttled from neighboring mesophyll cells. The CO(2) released is then refixed by ribulose-bisphosphate carboxylase. This pathway eliminates the photorespiratory loss of CO(2) that occurs in most plants. This is NADP-dependent malic enzyme, chloroplastic (MOD1) from Zea mays (Maize).